The following is a 395-amino-acid chain: ATP phosphoribosyltransferase regulatory subunit (395 aa).

Belongs to the class-II aminoacyl-tRNA synthetase family. HisZ subfamily. As to quaternary structure, heteromultimer composed of HisG and HisZ subunits.

It localises to the cytoplasm. Its pathway is amino-acid biosynthesis; L-histidine biosynthesis; L-histidine from 5-phospho-alpha-D-ribose 1-diphosphate: step 1/9. Functionally, required for the first step of histidine biosynthesis. May allow the feedback regulation of ATP phosphoribosyltransferase activity by histidine. This is ATP phosphoribosyltransferase regulatory subunit from Stutzerimonas stutzeri (Pseudomonas stutzeri).